Consider the following 272-residue polypeptide: NH(3)-dependent NAD(+) synthetase (272 aa).

Residue 45–52 participates in ATP binding; the sequence is GISGGQDS. D51 serves as a coordination point for Mg(2+). Residue R138 participates in deamido-NAD(+) binding. Position 158 (T158) interacts with ATP. Residue E163 participates in Mg(2+) binding. Deamido-NAD(+) contacts are provided by K171 and D178. Residues K187 and T209 each contribute to the ATP site. 258–259 contacts deamido-NAD(+); the sequence is HK.

The protein belongs to the NAD synthetase family. In terms of assembly, homodimer.

It catalyses the reaction deamido-NAD(+) + NH4(+) + ATP = AMP + diphosphate + NAD(+) + H(+). The protein operates within cofactor biosynthesis; NAD(+) biosynthesis; NAD(+) from deamido-NAD(+) (ammonia route): step 1/1. In terms of biological role, catalyzes the ATP-dependent amidation of deamido-NAD to form NAD. Uses ammonia as a nitrogen source. The chain is NH(3)-dependent NAD(+) synthetase from Bacillus cereus (strain 03BB102).